Here is a 146-residue protein sequence, read N- to C-terminus: Hemoglobin subunit beta (146 aa).

Val1 carries the post-translational modification N-acetylvaline. A Globin domain is found at 2 to 146 (HLTAEEKAAV…VANALAHKYH (145 aa)). Thr12 is subject to Phosphothreonine. At Ser44 the chain carries Phosphoserine. Lys59 carries the N6-acetyllysine modification. Residue His63 coordinates heme b. At Lys82 the chain carries N6-acetyllysine. Heme b is bound at residue His92. Cys93 carries the S-nitrosocysteine modification. Residue Lys144 is modified to N6-acetyllysine.

The protein belongs to the globin family. As to quaternary structure, heterotetramer of two alpha chains and two beta chains. As to expression, red blood cells.

In terms of biological role, involved in oxygen transport from the lung to the various peripheral tissues. This chain is Hemoglobin subunit beta (HBB), found in Mellivora capensis (Ratel).